The chain runs to 200 residues: A-type ATP synthase subunit E (200 aa).

It belongs to the V-ATPase E subunit family. As to quaternary structure, has multiple subunits with at least A(3), B(3), C, D, E, F, H, I and proteolipid K(x).

It localises to the cell membrane. Its function is as follows. Component of the A-type ATP synthase that produces ATP from ADP in the presence of a proton gradient across the membrane. The protein is A-type ATP synthase subunit E of Aeropyrum pernix (strain ATCC 700893 / DSM 11879 / JCM 9820 / NBRC 100138 / K1).